The primary structure comprises 265 residues: Hydroxyethylthiazole kinase (265 aa).

Residue Met-50 participates in substrate binding. ATP is bound by residues Arg-125 and Thr-171. Gly-198 is a binding site for substrate.

It belongs to the Thz kinase family. The cofactor is Mg(2+).

It carries out the reaction 5-(2-hydroxyethyl)-4-methylthiazole + ATP = 4-methyl-5-(2-phosphooxyethyl)-thiazole + ADP + H(+). It participates in cofactor biosynthesis; thiamine diphosphate biosynthesis; 4-methyl-5-(2-phosphoethyl)-thiazole from 5-(2-hydroxyethyl)-4-methylthiazole: step 1/1. Catalyzes the phosphorylation of the hydroxyl group of 4-methyl-5-beta-hydroxyethylthiazole (THZ). The chain is Hydroxyethylthiazole kinase from Salmonella paratyphi C (strain RKS4594).